A 99-amino-acid polypeptide reads, in one-letter code: Aspartyl/glutamyl-tRNA(Asn/Gln) amidotransferase subunit C (99 aa).

This sequence belongs to the GatC family. In terms of assembly, heterotrimer of A, B and C subunits.

It carries out the reaction L-glutamyl-tRNA(Gln) + L-glutamine + ATP + H2O = L-glutaminyl-tRNA(Gln) + L-glutamate + ADP + phosphate + H(+). It catalyses the reaction L-aspartyl-tRNA(Asn) + L-glutamine + ATP + H2O = L-asparaginyl-tRNA(Asn) + L-glutamate + ADP + phosphate + 2 H(+). Functionally, allows the formation of correctly charged Asn-tRNA(Asn) or Gln-tRNA(Gln) through the transamidation of misacylated Asp-tRNA(Asn) or Glu-tRNA(Gln) in organisms which lack either or both of asparaginyl-tRNA or glutaminyl-tRNA synthetases. The reaction takes place in the presence of glutamine and ATP through an activated phospho-Asp-tRNA(Asn) or phospho-Glu-tRNA(Gln). This chain is Aspartyl/glutamyl-tRNA(Asn/Gln) amidotransferase subunit C, found in Burkholderia mallei (strain NCTC 10247).